A 246-amino-acid chain; its full sequence is Triosephosphate isomerase (246 aa).

9-11 is a substrate binding site; the sequence is NWK. Residue His95 is the Electrophile of the active site. The Proton acceptor role is filled by Glu165. Substrate contacts are provided by residues Gly171, Ser210, and 231–232; that span reads GG.

This sequence belongs to the triosephosphate isomerase family. Homodimer.

The protein resides in the cytoplasm. It carries out the reaction D-glyceraldehyde 3-phosphate = dihydroxyacetone phosphate. It functions in the pathway carbohydrate biosynthesis; gluconeogenesis. It participates in carbohydrate degradation; glycolysis; D-glyceraldehyde 3-phosphate from glycerone phosphate: step 1/1. Its function is as follows. Involved in the gluconeogenesis. Catalyzes stereospecifically the conversion of dihydroxyacetone phosphate (DHAP) to D-glyceraldehyde-3-phosphate (G3P). The sequence is that of Triosephosphate isomerase from Thermodesulfovibrio yellowstonii (strain ATCC 51303 / DSM 11347 / YP87).